A 517-amino-acid chain; its full sequence is Peptide chain release factor 3 (517 aa).

A tr-type G domain is found at 9–269 (AKRRTFAIIS…DFVEHAPAPR (261 aa)). GTP is bound by residues 18 to 25 (SHPDAGKT), 86 to 90 (DTPGH), and 140 to 143 (NKLD).

The protein belongs to the TRAFAC class translation factor GTPase superfamily. Classic translation factor GTPase family. PrfC subfamily.

The protein localises to the cytoplasm. Functionally, increases the formation of ribosomal termination complexes and stimulates activities of RF-1 and RF-2. It binds guanine nucleotides and has strong preference for UGA stop codons. It may interact directly with the ribosome. The stimulation of RF-1 and RF-2 is significantly reduced by GTP and GDP, but not by GMP. This is Peptide chain release factor 3 from Halorhodospira halophila (strain DSM 244 / SL1) (Ectothiorhodospira halophila (strain DSM 244 / SL1)).